The chain runs to 166 residues: MPPKLDPSQIVDVYVRVTGGEVGAASSLAPKIGPLGLAPKKIGEDIAKETAKEWKGLRVTVKLTVQNRQAKVTVVPSAAALVIKALKEPERDRKKVKNIKHNGNISFDDVIEIAKIMRPRSIAKELSGTVKEILGTCVSVGCTVDGKDPKDLQEEINSGDIDIPNE.

This sequence belongs to the universal ribosomal protein uL11 family.

Its function is as follows. Binds directly to 26S ribosomal RNA. This chain is Large ribosomal subunit protein uL11x (RPL12C), found in Arabidopsis thaliana (Mouse-ear cress).